We begin with the raw amino-acid sequence, 375 residues long: Holliday junction branch migration complex subunit RuvB (375 aa).

Polar residues predominate over residues 1-22; that stretch reads MAIVSSKQSPQPDGSKKPSQAK. Residues 1 to 44 form a disordered region; the sequence is MAIVSSKQSPQPDGSKKPSQAKSVKKSVEHSKPQQTDALLQPEA. The interval 13–218 is large ATPase domain (RuvB-L); the sequence is DGSKKPSQAK…FGFVQRLRFY (206 aa). ATP contacts are provided by residues leucine 57, arginine 58, glycine 99, lysine 102, threonine 103, threonine 104, 165–167, arginine 208, tyrosine 218, and arginine 255; that span reads EDF. Threonine 103 contacts Mg(2+). Positions 219–289 are small ATPAse domain (RuvB-S); the sequence is EADELGQIVL…IAQEALELFN (71 aa). Residues 292 to 375 form a head domain (RuvB-H) region; sequence PCGLDWTDRR…PPDEQMRLLS (84 aa). 2 residues coordinate DNA: arginine 347 and arginine 352.

It belongs to the RuvB family. In terms of assembly, homohexamer. Forms an RuvA(8)-RuvB(12)-Holliday junction (HJ) complex. HJ DNA is sandwiched between 2 RuvA tetramers; dsDNA enters through RuvA and exits via RuvB. An RuvB hexamer assembles on each DNA strand where it exits the tetramer. Each RuvB hexamer is contacted by two RuvA subunits (via domain III) on 2 adjacent RuvB subunits; this complex drives branch migration. In the full resolvosome a probable DNA-RuvA(4)-RuvB(12)-RuvC(2) complex forms which resolves the HJ.

The protein resides in the cytoplasm. It carries out the reaction ATP + H2O = ADP + phosphate + H(+). Functionally, the RuvA-RuvB-RuvC complex processes Holliday junction (HJ) DNA during genetic recombination and DNA repair, while the RuvA-RuvB complex plays an important role in the rescue of blocked DNA replication forks via replication fork reversal (RFR). RuvA specifically binds to HJ cruciform DNA, conferring on it an open structure. The RuvB hexamer acts as an ATP-dependent pump, pulling dsDNA into and through the RuvAB complex. RuvB forms 2 homohexamers on either side of HJ DNA bound by 1 or 2 RuvA tetramers; 4 subunits per hexamer contact DNA at a time. Coordinated motions by a converter formed by DNA-disengaged RuvB subunits stimulates ATP hydrolysis and nucleotide exchange. Immobilization of the converter enables RuvB to convert the ATP-contained energy into a lever motion, pulling 2 nucleotides of DNA out of the RuvA tetramer per ATP hydrolyzed, thus driving DNA branch migration. The RuvB motors rotate together with the DNA substrate, which together with the progressing nucleotide cycle form the mechanistic basis for DNA recombination by continuous HJ branch migration. Branch migration allows RuvC to scan DNA until it finds its consensus sequence, where it cleaves and resolves cruciform DNA. This is Holliday junction branch migration complex subunit RuvB from Acaryochloris marina (strain MBIC 11017).